The chain runs to 402 residues: uncharacterized protein (402 aa).

This is an uncharacterized protein from Ostreid herpesvirus 1 (isolate France) (OsHV-1).